Here is a 211-residue protein sequence, read N- to C-terminus: MGKSPVVIGIAGGSGSGKTSVTRSIYEQFKGHSILMIQQDLYYKDQSHLPFEERLNTNYDHPLAFDNDYLIEHIQELLNYRPIEKPIYDYKLHTRSEETIPVEPKDVIILEGILVLEDKRLRDLMDMKLYVDTDADLRIIRRIMRDINERGRSIDSVIEQYVSVVRPMHNQFVEPTKRYADIIIPEGGQNHVAIDLMVTKIQTILEQNAIL.

12–19 (GGSGSGKT) provides a ligand contact to ATP.

This sequence belongs to the uridine kinase family.

It localises to the cytoplasm. The catalysed reaction is uridine + ATP = UMP + ADP + H(+). It catalyses the reaction cytidine + ATP = CMP + ADP + H(+). The protein operates within pyrimidine metabolism; CTP biosynthesis via salvage pathway; CTP from cytidine: step 1/3. It functions in the pathway pyrimidine metabolism; UMP biosynthesis via salvage pathway; UMP from uridine: step 1/1. This is Uridine kinase from Bacillus velezensis (strain DSM 23117 / BGSC 10A6 / LMG 26770 / FZB42) (Bacillus amyloliquefaciens subsp. plantarum).